A 282-amino-acid chain; its full sequence is Para-Rep C1 (282 aa).

The CRESS-DNA virus Rep endonuclease domain occupies 1 to 99 (MASKRWCFTL…ETLISEIGAP (99 aa)). The short motif at 7 to 10 (CFTL) is the RCR-1 element. The a divalent metal cation site is built by E38 and H47. The RCR-2 motif lies at 47–49 (HLQ). Positions 56-77 (KMIRLGGLKKKFGYRAHWEIAK) match the Nuclear localization signal motif. Y86 acts as the For DNA cleavage activity in catalysis. An RCR-3 motif is present at residues 86–89 (YCTK). S94 is a binding site for a divalent metal cation. Position 174–182 (174–182 (GSDGGEGKS)) interacts with ATP.

The protein belongs to the nanoviridea/circoviridae replication-associated protein family. Homooligomer (Potential). Rep binds to repeated DNA motifs (iterons). It depends on Mg(2+) as a cofactor. Requires Mn(2+) as cofactor.

Its subcellular location is the host nucleus. It catalyses the reaction ATP + H2O = ADP + phosphate + H(+). Its function is as follows. Initiates and terminates the replication only of its own subviral DNA molecule. The closed circular ssDNA genome is first converted to a superhelical dsDNA. Rep binds a specific hairpin at the genome origin of replication. Introduces an endonucleolytic nick within the intergenic region of the genome, thereby initiating the rolling circle replication (RCR). Following cleavage, binds covalently to the 5'-phosphate of DNA as a tyrosyl ester. The cleavage gives rise to a free 3'-OH that serves as a primer for the cellular DNA polymerase. The polymerase synthesizes the (+) strand DNA by rolling circle mechanism. After one round of replication, a Rep-catalyzed nucleotidyl transfer reaction releases a circular single-stranded virus genome, thereby terminating the replication. Displays origin-specific DNA cleavage, nucleotidyl transferase, ATPase and helicase activities. This is Para-Rep C1 (C1) from Faba bean necrotic yellows C11 alphasatellite (FBNYC11A).